A 148-amino-acid polypeptide reads, in one-letter code: Nucleoside diphosphate kinase (148 aa).

6 residues coordinate ATP: Lys9, Phe57, Arg85, Thr91, Arg102, and Asn112. Residue Thr91 is modified to Phosphothreonine. The active-site Pros-phosphohistidine intermediate is the His115. At Ser122 the chain carries Phosphoserine.

The protein belongs to the NDK family. Homotetramer. The cofactor is Mg(2+).

It is found in the cytoplasm. The enzyme catalyses a 2'-deoxyribonucleoside 5'-diphosphate + ATP = a 2'-deoxyribonucleoside 5'-triphosphate + ADP. It carries out the reaction a ribonucleoside 5'-diphosphate + ATP = a ribonucleoside 5'-triphosphate + ADP. Major role in the synthesis of nucleoside triphosphates other than ATP. The ATP gamma phosphate is transferred to the NDP beta phosphate via a ping-pong mechanism, using a phosphorylated active-site intermediate. The protein is Nucleoside diphosphate kinase of Bacillus cereus (strain ATCC 10987 / NRS 248).